A 199-amino-acid polypeptide reads, in one-letter code: Pre T-cell antigen receptor alpha (199 aa).

A signal peptide spans methionine 1–alanine 16. The Extracellular segment spans residues leucine 17–arginine 155. A disulfide bridge connects residues cysteine 47 and cysteine 107. Residues asparagine 67 and asparagine 117 are each glycosylated (N-linked (GlcNAc...) asparagine). Positions asparagine 117–glutamate 139 are disordered. The chain crosses the membrane as a helical span at residues leucine 156–leucine 176. The Cytoplasmic portion of the chain corresponds to alanine 177–threonine 199.

Heterodimer with TCRB; disulfide linked. This heterodimer assembles with CD3 proteins into a signaling-competent pre-T-cell receptor complex. Interacts with RHBDD1. In terms of tissue distribution, found in CD45+ but not in the CD45- fetal liver cells.

It localises to the membrane. The protein resides in the cell membrane. Component of the pre-T-cell receptor complex (composed of PTCRA, TCRB and the CD3 complex) that has a crucial role in early T-cell development, particularly alpha-beta T cell differentiation. The polypeptide is Pre T-cell antigen receptor alpha (Rattus norvegicus (Rat)).